The following is a 561-amino-acid chain: Oxygen-dependent choline dehydrogenase (561 aa).

Position 6-35 (6-35 (DYIIIGAGSAGNVLATRLTEDADVSVLLLE)) interacts with FAD. The active-site Proton acceptor is the His-475.

It belongs to the GMC oxidoreductase family. Requires FAD as cofactor.

It catalyses the reaction choline + A = betaine aldehyde + AH2. The enzyme catalyses betaine aldehyde + NAD(+) + H2O = glycine betaine + NADH + 2 H(+). It functions in the pathway amine and polyamine biosynthesis; betaine biosynthesis via choline pathway; betaine aldehyde from choline (cytochrome c reductase route): step 1/1. Its function is as follows. Involved in the biosynthesis of the osmoprotectant glycine betaine. Catalyzes the oxidation of choline to betaine aldehyde and betaine aldehyde to glycine betaine at the same rate. The protein is Oxygen-dependent choline dehydrogenase of Pseudomonas aeruginosa (strain LESB58).